The primary structure comprises 398 residues: MQYLTILGSTGSIGRSTLDIVRRHPDRFAVTALTANQGVAQMMSDCLEFHPSYAVMADEASAIALKEALAGHKLKTEVLTGTDALCQVAAHSSVDIVMAAIVGAAGLLPAMAAIKKGKTVLLANKEALVMSGRLFMDAAHHYSARILPVDSEHNAIFQCLPAEAQSALGNCDLSAAGVDKILLTGSGGPFRYTSLSQLSSVTPEQAVAHPNWSMGRKISVDSATMMNKGLEFIEAKWLFNATEEQIQVIIHPQSVIHSMVQYRDGSVLAQMGQPDMRTPIAHALGFPERVASGVSPLDFSRVGELSFLPVDFERYPCLKLAIEACWAGQGATTALNAANEIAVDAFLSGKIGFTQIHTVVLDVLSELKQANINDLESILAIDAEARLMAHQKITRLAV.

Residues T10, G11, S12, I13, and N124 each coordinate NADPH. Residue K125 coordinates 1-deoxy-D-xylulose 5-phosphate. NADPH is bound at residue E126. Mn(2+) is bound at residue D150. Residues S151, E152, S186, and H209 each contribute to the 1-deoxy-D-xylulose 5-phosphate site. Residue E152 participates in Mn(2+) binding. Residue G215 coordinates NADPH. The 1-deoxy-D-xylulose 5-phosphate site is built by S222, N227, K228, and E231. E231 lines the Mn(2+) pocket.

It belongs to the DXR family. The cofactor is Mg(2+). Requires Mn(2+) as cofactor.

The catalysed reaction is 2-C-methyl-D-erythritol 4-phosphate + NADP(+) = 1-deoxy-D-xylulose 5-phosphate + NADPH + H(+). Its pathway is isoprenoid biosynthesis; isopentenyl diphosphate biosynthesis via DXP pathway; isopentenyl diphosphate from 1-deoxy-D-xylulose 5-phosphate: step 1/6. In terms of biological role, catalyzes the NADPH-dependent rearrangement and reduction of 1-deoxy-D-xylulose-5-phosphate (DXP) to 2-C-methyl-D-erythritol 4-phosphate (MEP). This Tolumonas auensis (strain DSM 9187 / NBRC 110442 / TA 4) protein is 1-deoxy-D-xylulose 5-phosphate reductoisomerase.